We begin with the raw amino-acid sequence, 646 residues long: Zinc finger protein 493 (646 aa).

Residues 26 to 48 (FQCDKYVKVFHKLLNSNRHNTKH) form a C2H2-type 1; degenerate zinc finger. 2 consecutive C2H2-type zinc fingers follow at residues 54 to 76 (FKCK…KRIH) and 82 to 104 (YRCE…RRVH). The segment at 109–131 (SYKYECGKSFNQDSNLTTHKRIH) adopts a C2H2-type 4; degenerate zinc-finger fold. The C2H2-type 5 zinc-finger motif lies at 137–159 (YKCEECGTSFYQFSYLTRHKLIH). A C2H2-type 6; degenerate zinc finger spans residues 165–187 (YKCEQYGKTFNQSSTLTGHKIIH). A C2H2-type 7; degenerate zinc finger spans residues 193–215 (YKCEECGKAFSIFSTPTKHKIIH). Residues 221 to 243 (HRCEEYCKAYKESSHLTTHKRIH) form a C2H2-type 8; degenerate zinc finger. 14 C2H2-type zinc fingers span residues 249–271 (YKCE…KIIH), 277–299 (HRCE…KRIH), 305–327 (YKCE…KIIH), 333–355 (YKCE…RIIH), 361–383 (YKCE…KIIH), 389–411 (YKCE…KMIH), 417–439 (YKCE…KRIH), 445–467 (YKCK…KIIH), 473–495 (YKCE…KKIH), 501–523 (YKCE…KQIH), 529–551 (YKCE…KIIH), 557–579 (YKCE…KIIH), 585–607 (CKCE…KLIH), and 613–635 (YKCE…KIIH).

It is found in the nucleus. May be involved in transcriptional regulation. This is Zinc finger protein 493 (ZNF493) from Homo sapiens (Human).